A 265-amino-acid chain; its full sequence is Probable autolysin SsaALP (265 aa).

Residues 1 to 25 (MKKLAFAITATSGAAAFLTHHDAQA) form the signal peptide. LysM domains follow at residues 27 to 70 (TQHT…VISV) and 89 to 132 (SSHT…TLQI). The segment at 72–92 (GSDAQNTSNTSPQAGSASSHT) is disordered. Residues 74 to 92 (DAQNTSNTSPQAGSASSHT) are compositionally biased toward polar residues. Positions 141 to 265 (TPTATTGSNG…SEVSSYAFIH (125 aa)) constitute a Peptidase C51 domain.

It catalyses the reaction Hydrolyzes the link between N-acetylmuramoyl residues and L-amino acid residues in certain cell-wall glycopeptides.. Functionally, has weak lytic activity toward S.aureus cells. This Staphylococcus aureus (strain NCTC 8325 / PS 47) protein is Probable autolysin SsaALP.